A 1652-amino-acid polypeptide reads, in one-letter code: Venom factor (1652 aa).

A signal peptide spans 1 to 22 (MEGMALYLVAALLIGFPASSFG). Mg(2+)-binding residues include proline 519, aspartate 542, valine 543, and aspartate 545. 12 disulfide bridges follow: cysteine 547-cysteine 808, cysteine 616-cysteine 651, cysteine 684-cysteine 711, cysteine 685-cysteine 718, cysteine 698-cysteine 719, cysteine 864-cysteine 1502, cysteine 1347-cysteine 1478, cysteine 1378-cysteine 1447, cysteine 1495-cysteine 1500, cysteine 1507-cysteine 1579, cysteine 1526-cysteine 1650, and cysteine 1626-cysteine 1635. Positions 657–740 (RRRRRSVVLL…REDELFLARS (84 aa)) are excised as a propeptide. The interval 661-739 (RSVVLLDSKA…KREDELFLAR (79 aa)) is C3a-like domain. The region spanning 684 to 719 (CCEDGMHENPMGYSCEKREKYIQEGDACKAAFLECC) is the Anaphylatoxin-like domain. The segment at 743 to 754 (EDEFFGEDNIIS) is factor B binding site. A propeptide spanning residues 992 to 1270 (HLIITPSGCG…VVGFQGLAEY (279 aa)) is cleaved from the precursor. Residues 992–1270 (HLIITPSGCG…VVGFQGLAEY (279 aa)) form a C3d-like domain region. Residues 1000–1003 (CGEQ) constitute a cross-link (isoglutamyl cysteine thioester (Cys-Gln)). The tract at residues 1197–1260 (VLMAASTERN…GGTYGQTQAT (64 aa)) is factor H binding site. The NTR domain occupies 1507-1650 (CSLLNQQKKI…LSNTLTIFGC (144 aa)).

This sequence belongs to the venom complement C3 homolog family. Heterotrimer of alpha, beta and gamma chains; disulfide-linked. Is active with factor B in the presence of factor D. Post-translationally, first processed by the removal of 4 Arg residues by furin-type protease, forming two chains, alpha and gamma/beta precursor, linked by a disulfide bond. Probably, a cobrin-like protease cleaves the C3a-like domain and then the C3d-like domain, generating the mature venom factor (VF). In terms of tissue distribution, expressed by the venom gland.

It is found in the secreted. Functionally, complement-activating protein in venom. It is a structural and functional analog of complement component C3b, the activated form of C3. It binds factor B (CFB), which is subsequently cleaved by factor D (CFD) to form the bimolecular complex VF/Bb. VF/Bb is a C3/C5 convertase that cleaves both complement components C3 and C5. Structurally, it resembles the C3b degradation product C3c, which is not able to form a C3/C5 convertase. Unlike C3b/Bb, VF/Bb is a stable complex and completely resistant to the actions of complement regulatory factors H (CFH) and I (CFI). Therefore, VF continuously activates complement resulting in the depletion of complement activity. This is Venom factor from Crotalus adamanteus (Eastern diamondback rattlesnake).